Here is a 270-residue protein sequence, read N- to C-terminus: Acetylglutamate kinase (270 aa).

Residues 41–42 (GG), R63, and N166 each bind substrate.

It belongs to the acetylglutamate kinase family. ArgB subfamily.

The protein resides in the cytoplasm. It carries out the reaction N-acetyl-L-glutamate + ATP = N-acetyl-L-glutamyl 5-phosphate + ADP. The protein operates within amino-acid biosynthesis; L-arginine biosynthesis; N(2)-acetyl-L-ornithine from L-glutamate: step 2/4. Catalyzes the ATP-dependent phosphorylation of N-acetyl-L-glutamate. The chain is Acetylglutamate kinase from Anaeromyxobacter dehalogenans (strain 2CP-C).